The chain runs to 250 residues: Malonyl-[acyl-carrier protein] O-methyltransferase (250 aa).

Belongs to the methyltransferase superfamily.

It carries out the reaction malonyl-[ACP] + S-adenosyl-L-methionine = malonyl-[ACP] methyl ester + S-adenosyl-L-homocysteine. It functions in the pathway cofactor biosynthesis; biotin biosynthesis. Converts the free carboxyl group of a malonyl-thioester to its methyl ester by transfer of a methyl group from S-adenosyl-L-methionine (SAM). It allows to synthesize pimeloyl-ACP via the fatty acid synthetic pathway. The protein is Malonyl-[acyl-carrier protein] O-methyltransferase of Neorickettsia risticii (strain Illinois).